Here is a 362-residue protein sequence, read N- to C-terminus: F-box protein At1g54550 (362 aa).

Residues 1-47 (MATVTDLPDDLVREIFSRVPLTSLRAVRSTCKKWNAISKYDILGKKA) form the F-box domain.

This Arabidopsis thaliana (Mouse-ear cress) protein is F-box protein At1g54550.